Consider the following 525-residue polypeptide: Phosphoenolpyruvate carboxykinase (ATP) (525 aa).

Positions 52, 186, and 192 each coordinate substrate. ATP contacts are provided by residues Lys-192, His-211, and 228–236; that span reads GLSGTGKTT. The Mn(2+) site is built by Lys-192 and His-211. A Mn(2+)-binding site is contributed by Asp-249. ATP contacts are provided by residues Glu-277, Arg-314, 433-434, and Thr-439; that span reads RI. Arg-314 serves as a coordination point for substrate.

This sequence belongs to the phosphoenolpyruvate carboxykinase (ATP) family. Mn(2+) is required as a cofactor.

The protein resides in the cytoplasm. It carries out the reaction oxaloacetate + ATP = phosphoenolpyruvate + ADP + CO2. It participates in carbohydrate biosynthesis; gluconeogenesis. Involved in the gluconeogenesis. Catalyzes the conversion of oxaloacetate (OAA) to phosphoenolpyruvate (PEP) through direct phosphoryl transfer between the nucleoside triphosphate and OAA. This chain is Phosphoenolpyruvate carboxykinase (ATP), found in Fusobacterium nucleatum subsp. nucleatum (strain ATCC 25586 / DSM 15643 / BCRC 10681 / CIP 101130 / JCM 8532 / KCTC 2640 / LMG 13131 / VPI 4355).